The following is a 747-amino-acid chain: Kinesin-like protein KIF3B (747 aa).

Position 1 is an N-acetylmethionine (Met1). At Ser2 the chain carries N-acetylserine; in Kinesin-like protein KIF3B, N-terminally processed. Positions 9–340 (SVRVVVRCRP…LRYANRAKNI (332 aa)) constitute a Kinesin motor domain. Residue 96–103 (GQTGTGKT) coordinates ATP. A coiled-coil region spans residues 346 to 579 (VNEDPKDALL…EQTQNELTRE (234 aa)). 2 disordered regions span residues 374-412 (IGRRKRREKRREGGGSGGGGEEEEEEGEEGEEDGDDKDD) and 698-747 (IQVD…LVPK). Positions 393-411 (GEEEEEEGEEGEEDGDDKD) are enriched in acidic residues. Positions 580 to 747 (LKLKHLIIEN…YPQSRGLVPK (168 aa)) are globular. Residues 701-710 (DASSFESTAS) are compositionally biased toward polar residues. A compositionally biased stretch (basic residues) spans 711-721 (RKPKARPKSGR). Low complexity predominate over residues 722–735 (KSGSSSSSSGNPAS).

This sequence belongs to the TRAFAC class myosin-kinesin ATPase superfamily. Kinesin family. Kinesin II subfamily. In terms of assembly, heterodimer of KIF3A and KIF3B. KIF3A/KIF3B heterodimer interacts with KIFAP3 forming a heterotrimeric (KIF3A/KIF3B/KIFAP3) complex. Interacts with the SMC3 subunit of the cohesin complex. Interacts directly with IFT20. Interacts with FLCN.

The protein localises to the cytoplasm. Its subcellular location is the cytoskeleton. The protein resides in the cell projection. It localises to the cilium. It is found in the dendritic spine. Functionally, microtubule-based molecular motor that transport intracellular cargos, such as vesicles, organelles and protein complexes. Uses ATP hydrolysis to generate force to bind and move along the microtubule. Plays a role in cilia formation. Involved in photoreceptor integrity and opsin trafficking in rod photoreceptors. Transports vesicles containing N-methyl-D-aspartate (NMDA) receptor subunit GRIN2A into neuronal dendrites. The sequence is that of Kinesin-like protein KIF3B from Mus musculus (Mouse).